Reading from the N-terminus, the 165-residue chain is Protein SprT (165 aa).

In terms of domain architecture, SprT-like spans 20–163 (EKLTQANLKL…RCVHCGEQLV (144 aa)). Residue histidine 78 participates in Zn(2+) binding. Glutamate 79 is a catalytic residue. A Zn(2+)-binding site is contributed by histidine 82.

It belongs to the SprT family. It depends on Zn(2+) as a cofactor.

It localises to the cytoplasm. This chain is Protein SprT, found in Escherichia coli O139:H28 (strain E24377A / ETEC).